A 377-amino-acid chain; its full sequence is Probable dehydratase NIT22 (377 aa).

NADP(+) is bound by residues lysine 101 and arginine 196. A disordered region spans residues 220–243; that stretch reads ERGPKMNEHVPSTPPRRPDAVSSF. One can recognise a MaoC-like domain in the interval 233 to 332; that stretch reads PPRRPDAVSS…ILMWDMGLCK (100 aa). Threonine 265 and isoleucine 287 together coordinate NADP(+).

Belongs to the short-chain dehydrogenases/reductases (SDR) family.

It functions in the pathway siderophore biosynthesis. In terms of biological role, probable dehydratase; part of the gene cluster that mediates the biosynthesis of hydroxamate-containing siderophores that play a critical role in virulence via intracellular iron acquisition during macrophage infection. The polypeptide is Probable dehydratase NIT22 (Ajellomyces capsulatus (Darling's disease fungus)).